Reading from the N-terminus, the 117-residue chain is MKWTILNTLICPQSGIAFSAISSLRFLKFIMWYEADVILLPGESMKLYSSRVLINDQYHSLKIYNITVYDEAQWEKLRERPSCPYQAGGKQSDSCFFQSFCAIKRCPNNIPRGEPWR.

This sequence belongs to the IraM/RssC family.

Its subcellular location is the cytoplasm. In terms of biological role, involved in the stabilization of the sigma stress factor RpoS. The chain is Anti-adapter protein IraM from Klebsiella pneumoniae (strain 342).